The chain runs to 200 residues: Peptidyl-tRNA hydrolase (200 aa).

TRNA is bound at residue tyrosine 15. Histidine 20 acts as the Proton acceptor in catalysis. Tyrosine 66, asparagine 68, and asparagine 114 together coordinate tRNA.

This sequence belongs to the PTH family. In terms of assembly, monomer.

The protein resides in the cytoplasm. It catalyses the reaction an N-acyl-L-alpha-aminoacyl-tRNA + H2O = an N-acyl-L-amino acid + a tRNA + H(+). Hydrolyzes ribosome-free peptidyl-tRNAs (with 1 or more amino acids incorporated), which drop off the ribosome during protein synthesis, or as a result of ribosome stalling. Its function is as follows. Catalyzes the release of premature peptidyl moieties from peptidyl-tRNA molecules trapped in stalled 50S ribosomal subunits, and thus maintains levels of free tRNAs and 50S ribosomes. This Paraburkholderia phytofirmans (strain DSM 17436 / LMG 22146 / PsJN) (Burkholderia phytofirmans) protein is Peptidyl-tRNA hydrolase.